A 344-amino-acid chain; its full sequence is L-rhamnose-proton symporter (344 aa).

The next 10 membrane-spanning stretches (helical) occupy residues 4 to 24 (PILL…CFYA), 38 to 58 (WSLG…WWLL), 68 to 88 (FDMA…IGNI), 101 to 121 (MGIG…TPVL), 137 to 157 (TLLG…AGLL), 175 to 195 (LILA…MDAA), 207 to 227 (INAL…GAVV), 255 to 275 (LIAN…QFFF), 290 to 310 (ISWM…GLLF), and 324 to 344 (LVLG…GMAA).

The protein belongs to the L-rhamnose transporter (TC 2.A.7.6) family.

Its subcellular location is the cell inner membrane. It carries out the reaction L-rhamnopyranose(in) + H(+)(in) = L-rhamnopyranose(out) + H(+)(out). In terms of biological role, uptake of L-rhamnose across the cytoplasmic membrane with the concomitant transport of protons into the cell (symport system). This chain is L-rhamnose-proton symporter, found in Pectobacterium carotovorum subsp. carotovorum (strain PC1).